The sequence spans 209 residues: Transmembrane emp24 domain-containing protein B (209 aa).

The first 24 residues, 1–24 (MNKTNQLINICILVTLFLIGSSSA), serve as a signal peptide directing secretion. Residues 25–174 (LTLQVEPKSQ…RDTSESTNAR (150 aa)) lie on the Lumenal side of the membrane. Residues 34–119 (QECFYNFIES…AKVVTFTWAS (86 aa)) form the GOLD domain. A helical membrane pass occupies residues 175–195 (VVWWTIAEVIVLVVMGVGQIW). The Cytoplasmic portion of the chain corresponds to 196–209 (YLRKWFDNKSTGRV).

It belongs to the EMP24/GP25L family.

Its subcellular location is the cytoplasmic vesicle membrane. Could have a role in the budding of coatomer-coated and other species of coated vesicles. The polypeptide is Transmembrane emp24 domain-containing protein B (empB) (Dictyostelium discoideum (Social amoeba)).